The sequence spans 231 residues: Large ribosomal subunit protein uL1 (231 aa).

Belongs to the universal ribosomal protein uL1 family. Part of the 50S ribosomal subunit.

Binds directly to 23S rRNA. The L1 stalk is quite mobile in the ribosome, and is involved in E site tRNA release. In terms of biological role, protein L1 is also a translational repressor protein, it controls the translation of the L11 operon by binding to its mRNA. The protein is Large ribosomal subunit protein uL1 of Lactobacillus delbrueckii subsp. bulgaricus (strain ATCC 11842 / DSM 20081 / BCRC 10696 / JCM 1002 / NBRC 13953 / NCIMB 11778 / NCTC 12712 / WDCM 00102 / Lb 14).